Consider the following 156-residue polypeptide: Sensor histidine kinase component HK2 (156 aa).

The Extracellular portion of the chain corresponds to 1 to 42 (MALVLAAAGAVTVVQFRDAAHEADPDGALRGLTDDITADLVR). Residues 43–63 (ELVTILPIVLVIAAVAAYLLS) traverse the membrane as a helical segment. One can recognise an HAMP domain in the interval 64–120 (RAALRPVDRIRAAAQTLTTTPHPDTDAPLPVPPTDDEIAWLATTLNTMLTRLQRALA). Residues 64-156 (RAALRPVDRI…RCAGPDPPTS (93 aa)) lie on the Cytoplasmic side of the membrane. The Histidine kinase; first part domain maps to 128–156 (DASHELRTPLALLTTELELRCAGPDPPTS). At histidine 131 the chain carries Phosphohistidine; by autocatalysis.

In terms of assembly, homodimer. Each monomer interacts with HK1 and the receiver domain of TcrA. In terms of processing, phosphorylated by HK1.

Its subcellular location is the cell membrane. The enzyme catalyses ATP + protein L-histidine = ADP + protein N-phospho-L-histidine.. Member of the three-protein two-component system HK1/HK2/TcrA. HK2 transfers its phosphoryl group to TcrA. In Mycobacterium tuberculosis (strain ATCC 25618 / H37Rv), this protein is Sensor histidine kinase component HK2.